The chain runs to 156 residues: Ribosomal RNA large subunit methyltransferase H (156 aa).

S-adenosyl-L-methionine contacts are provided by residues L73, G104, and 123–128 (LSDLTL).

The protein belongs to the RNA methyltransferase RlmH family. As to quaternary structure, homodimer.

Its subcellular location is the cytoplasm. The catalysed reaction is pseudouridine(1915) in 23S rRNA + S-adenosyl-L-methionine = N(3)-methylpseudouridine(1915) in 23S rRNA + S-adenosyl-L-homocysteine + H(+). In terms of biological role, specifically methylates the pseudouridine at position 1915 (m3Psi1915) in 23S rRNA. The sequence is that of Ribosomal RNA large subunit methyltransferase H from Leptothrix cholodnii (strain ATCC 51168 / LMG 8142 / SP-6) (Leptothrix discophora (strain SP-6)).